Reading from the N-terminus, the 698-residue chain is Polyribonucleotide nucleotidyltransferase (698 aa).

Positions 486 and 492 each coordinate Mg(2+). The region spanning 553–612 (PRIIVRNIPKDRIGELIGPGGKNVRGISELTGAELYIEDDGKVTISGSNQESAEKAAKMV) is the KH domain. In terms of domain architecture, S1 motif spans 622-690 (GKIYEGKVKR…KTGKIDLSRK (69 aa)).

It belongs to the polyribonucleotide nucleotidyltransferase family. Mg(2+) is required as a cofactor.

The protein resides in the cytoplasm. The enzyme catalyses RNA(n+1) + phosphate = RNA(n) + a ribonucleoside 5'-diphosphate. In terms of biological role, involved in mRNA degradation. Catalyzes the phosphorolysis of single-stranded polyribonucleotides processively in the 3'- to 5'-direction. This is Polyribonucleotide nucleotidyltransferase from Leptospira interrogans serogroup Icterohaemorrhagiae serovar copenhageni (strain Fiocruz L1-130).